Reading from the N-terminus, the 485-residue chain is Rhamnulokinase (485 aa).

Ala11–Arg15 serves as a coordination point for ATP. Substrate contacts are provided by residues Ala79 and His234–Thr236. Asp235 functions as the Proton acceptor in the catalytic mechanism. ATP is bound at residue Thr257. Asn294 is a substrate binding site. Residues Gln302 and Gly401 each coordinate ATP.

The protein belongs to the rhamnulokinase family. The cofactor is Mg(2+).

It catalyses the reaction L-rhamnulose + ATP = L-rhamnulose 1-phosphate + ADP + H(+). It functions in the pathway carbohydrate degradation; L-rhamnose degradation; glycerone phosphate from L-rhamnose: step 2/3. In terms of biological role, involved in the catabolism of L-rhamnose (6-deoxy-L-mannose). Catalyzes the transfer of the gamma-phosphate group from ATP to the 1-hydroxyl group of L-rhamnulose to yield L-rhamnulose 1-phosphate. In Ligilactobacillus salivarius (strain UCC118) (Lactobacillus salivarius), this protein is Rhamnulokinase.